An 87-amino-acid chain; its full sequence is Small ribosomal subunit protein bS21 (87 aa).

Positions 47–63 are enriched in basic and acidic residues; that stretch reads YEKPSEKRARQKAEAVR. The segment at 47-87 is disordered; it reads YEKPSEKRARQKAEAVRRARKLARKRAQREGLLPMPKKPGR. Residues 64–73 show a composition bias toward basic residues; it reads RARKLARKRA.

The protein belongs to the bacterial ribosomal protein bS21 family.

The chain is Small ribosomal subunit protein bS21 from Caulobacter vibrioides (strain ATCC 19089 / CIP 103742 / CB 15) (Caulobacter crescentus).